The sequence spans 409 residues: Serine protease inhibitor 2 (409 aa).

The N-terminal stretch at 1–21 (MNKLNFVILCLAALLVFDATA) is a signal peptide. N-linked (GlcNAc...) asparagine glycans are attached at residues Asn294 and Asn324. Positions 356–360 (LGSEA) match the Hinge region; required for binding to peptidase motif.

It belongs to the serpin family. Forms a covalent heterodimer with protease CLIPB9; the interaction inhibits CLIPB9 protease activity. Forms a covalent heterodimer with protease CLIPB10; the interaction inhibits CLIPB10 catalytic activity. Interacts with CLIPB4 in the hemolymph of immune-challenged female mosquitoes; the interaction results in CLIPB4 inhibition. Post-translationally, protease CLIPB9 binds to SRPN2 via the hinge region resulting in the cleavage of the reactive bond. This leads to a conformational change in SRPN2 which traps CLIPB9 and distorts its active site, resulting in CLIPB9 inactivation.

It localises to the secreted. Its function is as follows. Serine protease inhibitor that functions in the melanization-mediated immune response. By preventing the activation of phenoloxidases through the inhibiting of serine proteases CLIPB9, CLIPB10 and CLIPB4, negatively regulates melanization in the hemolymph. By preventing melanization, has a detrimental role during P.berghei parasite mediated-infection and invasion of the mosquito midgut. The protein is Serine protease inhibitor 2 of Anopheles gambiae (African malaria mosquito).